An 89-amino-acid chain; its full sequence is Class II hydrophobin 2 (89 aa).

The N-terminal stretch at 1 to 15 (MKLYIAAALLTLGLA) is a signal peptide. 4 cysteine pairs are disulfide-bonded: Cys34-Cys74, Cys45-Cys66, Cys46-Cys58, and Cys75-Cys86.

It belongs to the cerato-ulmin hydrophobin family. Homodimer. Homodimers further self-assemble to form highly ordered films at water-air interfaces through intermolecular interactions.

It localises to the secreted. It is found in the cell wall. Functionally, aerial growth, conidiation, and dispersal of filamentous fungi in the environment rely upon a capability of their secreting small amphipathic proteins called hydrophobins (HPBs) with low sequence identity. Class I can self-assemble into an outermost layer of rodlet bundles on aerial cell surfaces, conferring cellular hydrophobicity that supports fungal growth, development and dispersal; whereas Class II form highly ordered films at water-air interfaces through intermolecular interactions but contribute nothing to the rodlet structure. This is Class II hydrophobin 2 from Trichoderma asperellum (strain ATCC 204424 / CBS 433.97 / NBRC 101777).